Here is a 356-residue protein sequence, read N- to C-terminus: MDHRDLSQVTLLMESTLIRTALRTDIQQFEKSFEQIIEQAGVFLATTEEHFISLSLVVMDEDVLIRHLCGFLASKLAIEGFLSFHQQTIQRTSGGDASLAKQVKAATVFVLELIQTLIYHKEAADYPGKHLGMMYDRDVKYFGGTLFHLNPQVNLDEELPELDDYYEDVDELTNYYHGEKLSHPLRQLPGNPWHKFFGNFPETRVEHAADTALFRENPRPGDLTVSIPGTILFLIPEFRQEHEKFRQLMLEHSQLPLPLLLEEARKERVQVIQRRLANVHHGNVEYDSLEPLCRENTDMIPRPEYTLEGNRTFGMQNLTVNSPDLIGDALPEGRIANVASQLEGFPARFLFTNKNK.

The DNA-binding element occupies 183–199; sequence HPLRQLPGNPWHKFFGN.

This sequence to N.crassa mta-2.

The protein localises to the nucleus. In terms of biological role, transcriptional activator that is required for post-fertilization events. It is required for the developmental events that occur in the female organ after fertilization. The chain is Sporulation minus regulator 1 (SMR1) from Podospora anserina (Pleurage anserina).